The sequence spans 281 residues: MESRKISVLIADDNKEFCNILNDYLLNQSDMIVVGIAKDGVEALKLIENKKPDLVVLDIIMPRLDGLGVLEKLNNKDAENLPRIIVLSAVGQDKITQRAITLGADYYVVKPFDMDVFTNRIREMFNNTISNSEQKRSYQVEEKEASFAGTIANDVYSDNIGNKAVDLESEITSIIHQIGVPAHIKGYMYLREAITMVVNNMELLSAVTKELYPSIAKKYNTTASRVERAIRHAIEVAWSRGQVETINKLFGYTINNGKGKPTNSEFIAMIADKLRLKNKVS.

Residues 7–125 (SVLIADDNKE…VFTNRIREMF (119 aa)) enclose the Response regulatory domain. 3 residues coordinate Ca(2+): aspartate 12, aspartate 13, and aspartate 58. Position 58 is a 4-aspartylphosphate (aspartate 58). Positions 213–232 (PSIAKKYNTTASRVERAIRH) form a DNA-binding region, H-T-H motif.

Ca(2+) is required as a cofactor.

The protein localises to the cytoplasm. May play the central regulatory role in sporulation. It may be an element of the effector pathway responsible for the activation of sporulation genes in response to nutritional stress. Spo0A may act in concert with spo0H (a sigma factor) to control the expression of some genes that are critical to the sporulation process. This is Stage 0 sporulation protein A homolog (spo0A) from Clostridium acetobutylicum (strain ATCC 824 / DSM 792 / JCM 1419 / IAM 19013 / LMG 5710 / NBRC 13948 / NRRL B-527 / VKM B-1787 / 2291 / W).